We begin with the raw amino-acid sequence, 286 residues long: Flagellar filament 31.3 kDa core protein (286 aa).

It belongs to the bacterial flagellin family. In terms of assembly, the core of the flagellum consists of several antigenically related polypeptides. Glycosylated. Glycosylation is not essential for motility.

The protein resides in the periplasmic flagellum. The protein localises to the periplasm. Its function is as follows. Component of the core of the flagella. The protein is Flagellar filament 31.3 kDa core protein (flaB2) of Treponema maltophilum.